The following is a 473-amino-acid chain: Siroheme synthase (473 aa).

The tract at residues M1–L203 is precorrin-2 dehydrogenase /sirohydrochlorin ferrochelatase. Residues D22–V23 and P43–K44 each bind NAD(+). S128 is subject to Phosphoserine. The segment at G215–A473 is uroporphyrinogen-III C-methyltransferase. Position 224 (P224) interacts with S-adenosyl-L-methionine. D247 (proton acceptor) is an active-site residue. K269 (proton donor) is an active-site residue. S-adenosyl-L-methionine contacts are provided by residues G300–D302, I305, T330–A331, M382, and G411.

This sequence in the N-terminal section; belongs to the precorrin-2 dehydrogenase / sirohydrochlorin ferrochelatase family. In the C-terminal section; belongs to the precorrin methyltransferase family.

It catalyses the reaction uroporphyrinogen III + 2 S-adenosyl-L-methionine = precorrin-2 + 2 S-adenosyl-L-homocysteine + H(+). It carries out the reaction precorrin-2 + NAD(+) = sirohydrochlorin + NADH + 2 H(+). The enzyme catalyses siroheme + 2 H(+) = sirohydrochlorin + Fe(2+). Its pathway is cofactor biosynthesis; adenosylcobalamin biosynthesis; precorrin-2 from uroporphyrinogen III: step 1/1. It functions in the pathway cofactor biosynthesis; adenosylcobalamin biosynthesis; sirohydrochlorin from precorrin-2: step 1/1. It participates in porphyrin-containing compound metabolism; siroheme biosynthesis; precorrin-2 from uroporphyrinogen III: step 1/1. The protein operates within porphyrin-containing compound metabolism; siroheme biosynthesis; siroheme from sirohydrochlorin: step 1/1. Its pathway is porphyrin-containing compound metabolism; siroheme biosynthesis; sirohydrochlorin from precorrin-2: step 1/1. Multifunctional enzyme that catalyzes the SAM-dependent methylations of uroporphyrinogen III at position C-2 and C-7 to form precorrin-2 via precorrin-1. Then it catalyzes the NAD-dependent ring dehydrogenation of precorrin-2 to yield sirohydrochlorin. Finally, it catalyzes the ferrochelation of sirohydrochlorin to yield siroheme. The chain is Siroheme synthase from Pseudoalteromonas translucida (strain TAC 125).